The sequence spans 212 residues: Uracil phosphoribosyltransferase (212 aa).

5-phospho-alpha-D-ribose 1-diphosphate is bound by residues arginine 78, arginine 103, and 130-138 (DPMLATGGS). Uracil contacts are provided by residues isoleucine 193 and 198-200 (GDA). Aspartate 199 serves as a coordination point for 5-phospho-alpha-D-ribose 1-diphosphate.

The protein belongs to the UPRTase family. Mg(2+) serves as cofactor.

The enzyme catalyses UMP + diphosphate = 5-phospho-alpha-D-ribose 1-diphosphate + uracil. Its pathway is pyrimidine metabolism; UMP biosynthesis via salvage pathway; UMP from uracil: step 1/1. Allosterically activated by GTP. Functionally, catalyzes the conversion of uracil and 5-phospho-alpha-D-ribose 1-diphosphate (PRPP) to UMP and diphosphate. The protein is Uracil phosphoribosyltransferase of Pseudomonas aeruginosa (strain LESB58).